Consider the following 1044-residue polypeptide: Multiple epidermal growth factor-like domains protein 11 (1044 aa).

A signal peptide spans 1-19 (MVLSLTGLIAFSFLQATLA). Residues 20–848 (LNPEDPNVCS…SPALGAERHS (829 aa)) are Extracellular-facing. An EMI domain is found at 24-101 (DPNVCSHWES…YYESGDFCIP (78 aa)). 14 disulfide bridges follow: Cys28/Cys89, Cys54/Cys63, Cys88/Cys99, Cys103/Cys118, Cys120/Cys129, Cys146/Cys154, Cys148/Cys161, Cys163/Cys172, Cys185/Cys197, Cys191/Cys204, Cys206/Cys215, Cys228/Cys240, Cys234/Cys247, and Cys249/Cys258. EGF-like domains lie at 95–130 (SGDFCIPLCTEECVHGRCVSPDTCHCEPGWGGPDCS), 143–173 (SNRCQCQNGALCNPITGACVCAAGFRGWRCE), 181–216 (HGKGCQLPCQCRHGASCDPRAGECLCAPGYTGVYCE), 224–259 (HGAHCELRCPCQNGGTCHHITGECACPPGWTGAVCA), 267–302 (FGQNCSQDCPCHHGGQCDHVTGQCHCTAGYMGDRCQ), 310–345 (FGFQCSQHCDCHNGGQCSPTTGACECEPGYKGPRCQ), 399–434 (YGDGCQLPCTCQNGADCHSITGGCTCAPGFMGEVCA), 442–477 (YGPNCSSICSCNNGGTCSPVDGSCTCKEGWQGLDCT), and 490–520 (NESCTCANGAACSPIDGSCSCTPGWLGDTCE). Asn270 carries N-linked (GlcNAc...) asparagine glycosylation. 15 cysteine pairs are disulfide-bonded: Cys271/Cys283, Cys277/Cys290, Cys292/Cys301, Cys314/Cys326, Cys320/Cys333, Cys335/Cys344, Cys403/Cys415, Cys409/Cys422, Cys424/Cys433, Cys446/Cys458, Cys452/Cys465, Cys467/Cys476, Cys493/Cys501, Cys495/Cys508, and Cys510/Cys519. Asn531 is a glycosylation site (N-linked (GlcNAc...) asparagine). 5 consecutive EGF-like domains span residues 571-606 (WGPNCSVSCSCENGGSCSPEDGSCECAPGFRGPLCQ), 659-694 (FGQDCAQLCSCANNGTCSPIDGSCQCFPGWIGKDCS), 707-737 (FHACSCHNGASCSAEDGACHCTPGWTGLFCT), 750-780 (GRVCQCQNGASCDHISGKCTCRTGFTGQHCE), and 788-823 (FGYGCQQLCECMNNSTCDHVTGTCYCSPGFKGIRCD). Cystine bridges form between Cys575–Cys587, Cys581–Cys594, Cys596–Cys605, Cys663–Cys675, Cys669–Cys682, Cys684–Cys693, Cys710–Cys718, Cys712–Cys725, Cys727–Cys736, Cys753–Cys761, Cys755–Cys768, Cys770–Cys779, Cys792–Cys804, Cys798–Cys811, and Cys813–Cys822. Residues 849–869 (VGAVTGIMLLLFLIVVLLGLF) traverse the membrane as a helical segment. At 870-1044 (AWHRRRQKEK…ANGPSQDKQS (175 aa)) the chain is on the cytoplasmic side. Residues 1023–1044 (GHYDLLPVRQSPANGPSQDKQS) are disordered. Over residues 1033-1044 (SPANGPSQDKQS) the composition is skewed to polar residues.

Belongs to the MEGF family. Homomer. Does not interact with MEGF10.

The protein resides in the cell membrane. Its subcellular location is the basolateral cell membrane. Functionally, may regulate the mosaic spacing of specific neuron subtypes in the retina through homotypic retinal neuron repulsion. Mosaics provide a mechanism to distribute each cell type evenly across the retina, ensuring that all parts of the visual field have access to a full set of processing elements. The sequence is that of Multiple epidermal growth factor-like domains protein 11 (MEGF11) from Homo sapiens (Human).